We begin with the raw amino-acid sequence, 932 residues long: DNA mismatch repair protein MutS (932 aa).

615–622 (GPNMAGKS) is a binding site for ATP.

The protein belongs to the DNA mismatch repair MutS family.

In terms of biological role, this protein is involved in the repair of mismatches in DNA. It is possible that it carries out the mismatch recognition step. This protein has a weak ATPase activity. In Clostridium botulinum (strain Okra / Type B1), this protein is DNA mismatch repair protein MutS.